The chain runs to 90 residues: Acylphosphatase (90 aa).

Residues 4–90 (CVRVRVSGRV…KGHDDFKIIY (87 aa)) form the Acylphosphatase-like domain. Active-site residues include Arg-19 and Asn-37.

Belongs to the acylphosphatase family.

It carries out the reaction an acyl phosphate + H2O = a carboxylate + phosphate + H(+). The chain is Acylphosphatase (acyP) from Methanothrix thermoacetophila (strain DSM 6194 / JCM 14653 / NBRC 101360 / PT) (Methanosaeta thermophila).